A 592-amino-acid polypeptide reads, in one-letter code: Frizzled-1 (592 aa).

Residues 1–26 (MAERRGPAGGGSGEVGGGRRAGGDRC) form a disordered region. A signal peptide spans 1–48 (MAERRGPAGGGSGEVGGGRRAGGDRCPRRPPALPLLLLLWAAALPAGG). Residues 7-20 (PAGGGSGEVGGGRR) show a composition bias toward gly residues. Residues 49–271 (QPAAQPAALS…PEELRFSRTW (223 aa)) are Extracellular-facing. An FZ domain is found at 65–184 (PDHGYCQPIS…HGAGELCVGQ (120 aa)). 5 disulfides stabilise this stretch: cysteine 70-cysteine 131, cysteine 78-cysteine 124, cysteine 115-cysteine 152, cysteine 141-cysteine 181, and cysteine 145-cysteine 169. An N-linked (GlcNAc...) asparagine glycan is attached at asparagine 84. Asparagine 185 is a glycosylation site (N-linked (GlcNAc...) asparagine). Residues 185-219 (NASERGTPTPALRPESWTSNPHRGGGAGGSGPGEA) form a disordered region. Gly residues predominate over residues 207–218 (RGGGAGGSGPGE). Residues 272 to 292 (IGIWSVLCCASTLFTVLTYLV) form a helical membrane-spanning segment. Over 293 to 303 (DMKRFSYPERP) the chain is Cytoplasmic. A helical membrane pass occupies residues 304–324 (IIFLSGCYTAVAVAYIAGFLL). Residues 325-351 (EERVVCNERFAEDGSRTVAQGTKREGC) lie on the Extracellular side of the membrane. A helical transmembrane segment spans residues 352–372 (TILFMMLYFFGMASSIWWVIL). The Cytoplasmic segment spans residues 373-394 (SLTWFLAAGMKWGHEAIEANSQ). A helical membrane pass occupies residues 395–415 (YFHLAAWAVPAIKTITILALG). The Extracellular segment spans residues 416 to 438 (QVDGDVLSGVCFVGINNVDALRG). Residues 439–459 (FVLAPLFVYLFIGTSFLLAGF) form a helical membrane-spanning segment. Residues 460–485 (VSLFRIRTIMKHDGTKTEKLEKLMVR) lie on the Cytoplasmic side of the membrane. The helical transmembrane segment at 486-506 (IGIFSVLYTVPATIVIACYFY) threads the bilayer. The Extracellular segment spans residues 507–546 (EQAFREQWERSWVTQSCKSYAIPCPNNHSSHHPPMSPDFT). An N-linked (GlcNAc...) asparagine glycan is attached at asparagine 533. Residues 547-567 (VFMIKYLMTLIVGITSGFWIW) form a helical membrane-spanning segment. Residues 568-592 (SGKTLNSWRKFYTRLTNSKQGETTV) lie on the Cytoplasmic side of the membrane. Residues 570-575 (KTLNSW) carry the Lys-Thr-X-X-X-Trp motif, mediates interaction with the PDZ domain of Dvl family members motif. The PDZ-binding motif lies at 590-592 (TTV).

This sequence belongs to the G-protein coupled receptor Fz/Smo family. In terms of tissue distribution, expressed in the lens, otic placode (medial wall of the vesicle) and in epibranchial placode. Also expressed in the developing somites (dermomyotome).

The protein localises to the cell membrane. Receptor for Wnt proteins. Functions in the canonical Wnt/beta-catenin signaling pathway. The canonical Wnt/beta-catenin signaling pathway leads to the activation of disheveled proteins, inhibition of GSK-3 kinase, nuclear accumulation of beta-catenin and activation of Wnt target genes. A second signaling pathway involving PKC and calcium fluxes has been seen for some family members, but it is not yet clear if it represents a distinct pathway or if it can be integrated in the canonical pathway, as PKC seems to be required for Wnt-mediated inactivation of GSK-3 kinase. Both pathways seem to involve interactions with G-proteins. May be involved in transduction and intercellular transmission of polarity information during tissue morphogenesis and/or in differentiated tissues. The polypeptide is Frizzled-1 (FZD1) (Gallus gallus (Chicken)).